A 457-amino-acid polypeptide reads, in one-letter code: tRNA (guanine(37)-N(1))-methyltransferase (457 aa).

S-adenosyl-L-methionine contacts are provided by residues histidine 240, 278-279 (DL), 306-307 (DG), and asparagine 338.

The protein belongs to the class I-like SAM-binding methyltransferase superfamily. TRM5/TYW2 family. As to quaternary structure, monomer.

The protein resides in the mitochondrion matrix. It is found in the nucleus. It localises to the cytoplasm. The catalysed reaction is guanosine(37) in tRNA + S-adenosyl-L-methionine = N(1)-methylguanosine(37) in tRNA + S-adenosyl-L-homocysteine + H(+). Functionally, specifically methylates the N1 position of guanosine-37 in various cytoplasmic and mitochondrial tRNAs. Methylation is not dependent on the nature of the nucleoside 5' of the target nucleoside. This is the first step in the biosynthesis of wybutosine (yW), a modified base adjacent to the anticodon of tRNAs and required for accurate decoding. The polypeptide is tRNA (guanine(37)-N(1))-methyltransferase (Drosophila melanogaster (Fruit fly)).